A 445-amino-acid polypeptide reads, in one-letter code: Probable fructoselysine/psicoselysine transporter FrlA (445 aa).

The next 12 membrane-spanning stretches (helical) occupy residues 10–30, 38–58, 93–113, 121–141, 155–175, 181–201, 236–256, 273–293, 334–354, 355–375, 389–410, and 417–435; these read LGFW…GIFV, AAGT…IVIP, GWAS…LAIV, PIDP…FMLL, LITI…IFWF, AAPT…LAGI, CLLV…LMPF, IPAL…IVIL, IILQ…TSLL, GYFT…IIWC, AFGL…STFV, and LICA…AFWA.

Belongs to the amino acid-polyamine-organocation (APC) superfamily.

The protein localises to the cell inner membrane. It catalyses the reaction N(6)-(D-fructosyl)-L-lysine(in) = N(6)-(D-fructosyl)-L-lysine(out). It carries out the reaction N(6)-(D-psicosyl)-L-lysine(in) = N(6)-(D-psicosyl)-L-lysine(out). It functions in the pathway carbohydrate metabolism; fructoselysine degradation. Is likely involved in the transport of fructoselysine and psicoselysine to the cytoplasm, where they are degraded. The protein is Probable fructoselysine/psicoselysine transporter FrlA of Escherichia coli (strain K12).